The following is a 247-amino-acid chain: ATP synthase subunit C lysine N-methyltransferase (247 aa).

Met1 carries the N-acetylmethionine modification. The segment covering 1 to 12 (MERVGTPEEERQ) has biased composition (basic and acidic residues). A disordered region spans residues 1-25 (MERVGTPEEERQAGPVLPTSLESDS). The helical transmembrane segment at 34–54 (LITGVVGGALLTVYAVATPFI) threads the bilayer. The segment at 51–85 (TPFITPALRKVCLPFVPATSKQVENVVRMLRHRRG) is required for mitochondrial location. The tract at residues 209–247 (QRGRGGRPNQEWVGQKNLSETAGLQASSSETRSKLLDVE) is disordered. The segment covering 224 to 238 (KNLSETAGLQASSSE) has biased composition (polar residues).

It belongs to the ANT/ATPSC lysine N-methyltransferase family. Ubiquitously expressed.

The protein localises to the mitochondrion membrane. The catalysed reaction is L-lysyl-[protein] + 3 S-adenosyl-L-methionine = N(6),N(6),N(6)-trimethyl-L-lysyl-[protein] + 3 S-adenosyl-L-homocysteine + 3 H(+). Functionally, mitochondrial protein-lysine N-methyltransferase that trimethylates ATP synthase subunit C, ATP5MC1 and ATP5MC2. Trimethylation is required for proper incorporation of the C subunit into the ATP synthase complex and mitochondrial respiration. Promotes chronic pain. Involved in persistent inflammatory and neuropathic pain: methyltransferase activity in the mitochondria of sensory neurons promotes chronic pain via a pathway that depends on the production of reactive oxygen species (ROS) and on the engagement of spinal cord microglia. The polypeptide is ATP synthase subunit C lysine N-methyltransferase (Mus musculus (Mouse)).